The sequence spans 344 residues: MGGSILLGIFWHFVGATSAACFYAPMKKVTNWSWETMWAIAGIFSWILLPWGISYWLLPDFGSYYSFFGSDILLPVFLFGAMWGIGNIGYGLTMRYLGMSMGIGIAIGITLIVGTLMTPIIQGRFGELLASTGGQMTLIGVVIAVVGVAVVSYAGLLKEKAIGVTAEEFNLKKGLALAVMCGIFSAGMSFAMSAATPMHEEAARLGVDPLYVALPSYVVIMGGGAIINLGFCIIRLITRPELSFKADMSVVKGLLISNILFSALGGIMWYFQFFFYAWGHANIPANYGFMSWMLHMSFYVLCGGIVGLLLHEWKDTGKKPTRVLCIGCLIIVLAANIVGLGMAN.

10 consecutive transmembrane segments (helical) span residues 5-25 (ILLGIFWHFVGATSAACFYAP), 38-58 (WAIAGIFSWILLPWGISYWLL), 72-92 (ILLPVFLFGAMWGIGNIGYGL), 101-121 (MGIGIAIGITLIVGTLMTPII), 137-157 (TLIGVVIAVVGVAVVSYAGLL), 175-195 (LALAVMCGIFSAGMSFAMSAA), 214-234 (LPSYVVIMGGGAIINLGFCII), 259-279 (ILFSALGGIMWYFQFFFYAWG), 289-309 (FMSWMLHMSFYVLCGGIVGLL), and 323-343 (VLCIGCLIIVLAANIVGLGMA).

It belongs to the L-rhamnose transporter (TC 2.A.7.6) family.

It localises to the cell inner membrane. It carries out the reaction L-rhamnopyranose(in) + H(+)(in) = L-rhamnopyranose(out) + H(+)(out). Uptake of L-rhamnose across the cytoplasmic membrane with the concomitant transport of protons into the cell (symport system). The sequence is that of L-rhamnose-proton symporter from Mannheimia succiniciproducens (strain KCTC 0769BP / MBEL55E).